Here is a 334-residue protein sequence, read N- to C-terminus: Heat-inducible transcription repressor HrcA (334 aa).

It belongs to the HrcA family.

Functionally, negative regulator of class I heat shock genes (grpE-dnaK-dnaJ and groELS operons). Prevents heat-shock induction of these operons. The protein is Heat-inducible transcription repressor HrcA of Bordetella bronchiseptica (strain ATCC BAA-588 / NCTC 13252 / RB50) (Alcaligenes bronchisepticus).